The sequence spans 599 residues: Translation initiation factor IF-2 (599 aa).

One can recognise a tr-type G domain in the interval Pro-111–Glu-278. Positions Gly-120 to Thr-127 are G1. Residue Gly-120–Thr-127 participates in GTP binding. The tract at residues Gly-145–His-149 is G2. Residues Asp-166–Gly-169 form a G3 region. GTP is bound by residues Asp-166–His-170 and Asn-220–Asp-223. The segment at Asn-220 to Asp-223 is G4. Residues Ser-256–Leu-258 form a G5 region.

This sequence belongs to the TRAFAC class translation factor GTPase superfamily. Classic translation factor GTPase family. IF-2 subfamily.

It localises to the cytoplasm. Its function is as follows. One of the essential components for the initiation of protein synthesis. Protects formylmethionyl-tRNA from spontaneous hydrolysis and promotes its binding to the 30S ribosomal subunits. Also involved in the hydrolysis of GTP during the formation of the 70S ribosomal complex. In Mesomycoplasma hyopneumoniae (strain 7448) (Mycoplasma hyopneumoniae), this protein is Translation initiation factor IF-2.